Consider the following 354-residue polypeptide: Peripherin-2 (354 aa).

At M1–N24 the chain is on the cytoplasmic side. A helical transmembrane segment spans residues W25–I43. The Lumenal segment spans residues E44–P61. Residues N62 to K80 traverse the membrane as a helical segment. Residues I81–K99 lie on the Cytoplasmic side of the membrane. The chain crosses the membrane as a helical span at residues P100 to R123. Topologically, residues G124 to S264 are lumenal. The N-linked (GlcNAc...) asparagine glycan is linked to N229. A helical transmembrane segment spans residues M265–L290. Residues E291 to S354 are Cytoplasmic-facing. The disordered stretch occupies residues G335 to S354.

This sequence belongs to the PRPH2/ROM1 family. As to quaternary structure, homodimer; disulfide-linked.

It is found in the membrane. Functionally, may be involved in the morphogenesis of retina outer segment disks and the development and maintenance of the retina ultrastructure. The protein is Peripherin-2 (PRPH2) of Gallus gallus (Chicken).